The chain runs to 322 residues: Retinal homeobox protein Rx-A (322 aa).

Residues 32 to 39 (HSIEAILG) carry the Octapeptide motif motif. The segment covering 75-87 (TEEIHPQQEHLED) has biased composition (basic and acidic residues). Residues 75–136 (TEEIHPQQEH…KKKHRRNRTT (62 aa)) are disordered. Positions 100–117 (KTSSECLSPGLSTSNSDN) are enriched in polar residues. Residues 130-189 (HRRNRTTFTTYQLHELERAFEKSHYPDVYSREELAMKVNLPEVRVQVWFQNRRAKWRRQE) constitute a DNA-binding region (homeobox). An OAR motif is present at residues 302–315 (NSIASLRMKAKEHI). A Nuclear localization signal motif is present at residues 308-312 (RMKAK).

This sequence belongs to the paired homeobox family. Bicoid subfamily. As to expression, highly expressed in anterior neural plate followed by neural retina, pigmented epithelium, in pineal gland, diencephalon floor and epiphysis. At later stages, the neuroretina remains the primary site of expression. No expression in the developing lens and cornea.

The protein localises to the nucleus. Functionally, plays a critical role in eye formation by regulating the initial specification of retinal cells and/or their subsequent proliferation. This is Retinal homeobox protein Rx-A (rax-a) from Xenopus laevis (African clawed frog).